The primary structure comprises 338 residues: Eukaryotic translation initiation factor 3 subunit H (338 aa).

Positions 22–154 (VQCDGLAVMK…LKAYRLTPQA (133 aa)) constitute an MPN domain.

This sequence belongs to the eIF-3 subunit H family. Component of the eukaryotic translation initiation factor 3 (eIF-3) complex. The eIF-3 complex interacts with pix. Interacts with mxt.

It is found in the cytoplasm. Its function is as follows. Component of the eukaryotic translation initiation factor 3 (eIF-3) complex, which is involved in protein synthesis of a specialized repertoire of mRNAs and, together with other initiation factors, stimulates binding of mRNA and methionyl-tRNAi to the 40S ribosome. The eIF-3 complex specifically targets and initiates translation of a subset of mRNAs involved in cell proliferation. The protein is Eukaryotic translation initiation factor 3 subunit H of Drosophila melanogaster (Fruit fly).